The primary structure comprises 178 residues: FXYD domain-containing ion transport regulator 5 (178 aa).

The first 21 residues, 1–21, serve as a signal peptide directing secretion; it reads MSLSSRLCLLTIVALILPSRG. A compositionally biased stretch (polar residues) spans 21 to 59; it reads GQTPKKPTSIFTADQTSATTRDNVPDPDQTSPGVQTTPL. The tract at residues 21 to 130 is disordered; the sequence is GQTPKKPTSI…SYIEHPLDSN (110 aa). Residues 22–145 are Extracellular-facing; sequence QTPKKPTSIF…YYDDTTLRKR (124 aa). Over residues 67–79 the composition is skewed to low complexity; it reads TGSQTAAQTETQQ. A compositionally biased stretch (polar residues) spans 80–100; the sequence is LTKMATSNPVSDPGPHTSSKK. The chain crosses the membrane as a helical span at residues 146–166; that stretch reads GLLVAAVLFITGIIILTSGKC. Topologically, residues 167 to 178 are cytoplasmic; sequence RQLSQFCLNRHR.

This sequence belongs to the FXYD family. Regulatory subunit of the sodium/potassium-transporting ATPase which is composed of a catalytic alpha subunit, a non-catalytic beta subunit and an additional regulatory subunit. The regulatory subunit, a member of the FXYD protein family, modulates the enzymatic activity in a tissue- and isoform-specific way by changing affinities of the Na+/K+-ATPase toward Na(+), K(+) or ATP. Glycosylated. In terms of tissue distribution, expressed mainly in epithelial tissue, such as lung, intestine and kidney. Not detected in brain, liver, muscle, and heart.

The protein resides in the cell membrane. It is found in the basolateral cell membrane. Associates with and regulates the activity of the sodium/potassium-transporting ATPase (NKA) which catalyzes the hydrolysis of ATP coupled with the exchange of Na(+) and K(+) ions across the plasma membrane. May increase NKA activity by increasing the apparent affinity for Na(+). Involved in down-regulation of E-cadherin which results in reduced cell adhesion. Promotes metastasis. The sequence is that of FXYD domain-containing ion transport regulator 5 (Fxyd5) from Mus musculus (Mouse).